The following is a 146-amino-acid chain: Probable flagellum biosynthesis repressor protein FlbT 1 (146 aa).

The protein belongs to the FlbT family.

Its function is as follows. Has a post-transcriptional repressor function in flagellum biogenesis. Associates with the 5'-UTR of fljK mRNA and promotes its degradation. The protein is Probable flagellum biosynthesis repressor protein FlbT 1 of Bradyrhizobium diazoefficiens (strain JCM 10833 / BCRC 13528 / IAM 13628 / NBRC 14792 / USDA 110).